The sequence spans 121 residues: Immunoglobulin kappa variable 4-1 (121 aa).

An N-terminal signal peptide occupies residues 1–20; that stretch reads MVLQTQVFISLLLWISGAYG. The interval 21-43 is framework-1; sequence DIVMTQSPDSLAVSLGERATINC. The Ig-like domain occupies 21-121; sequence DIVMTQSPDS…YYCQQYYSTP (101 aa). Cysteine 43 and cysteine 114 are oxidised to a cystine. A complementarity-determining-1 region spans residues 44–60; sequence KSSQSVLYSSNNKNYLA. The interval 61-75 is framework-2; the sequence is WYQQKPGQPPKLLIY. The complementarity-determining-2 stretch occupies residues 76–82; it reads WASTRES. The interval 83 to 114 is framework-3; that stretch reads GVPDRFSGSGSGTDFTLTISSLQAEDVAVYYC. The complementarity-determining-3 stretch occupies residues 115-121; that stretch reads QQYYSTP.

As to quaternary structure, immunoglobulins are composed of two identical heavy chains and two identical light chains; disulfide-linked.

It localises to the secreted. The protein resides in the cell membrane. Functionally, v segment of the variable domain of immunoglobulins light chain that participates in the antigen recognition. Immunoglobulins, also known as antibodies, are membrane-bound or secreted glycoproteins produced by B lymphocytes. In the recognition phase of humoral immunity, the membrane-bound immunoglobulins serve as receptors which, upon binding of a specific antigen, trigger the clonal expansion and differentiation of B lymphocytes into immunoglobulins-secreting plasma cells. Secreted immunoglobulins mediate the effector phase of humoral immunity, which results in the elimination of bound antigens. The antigen binding site is formed by the variable domain of one heavy chain, together with that of its associated light chain. Thus, each immunoglobulin has two antigen binding sites with remarkable affinity for a particular antigen. The variable domains are assembled by a process called V-(D)-J rearrangement and can then be subjected to somatic hypermutations which, after exposure to antigen and selection, allow affinity maturation for a particular antigen. This Homo sapiens (Human) protein is Immunoglobulin kappa variable 4-1.